Reading from the N-terminus, the 163-residue chain is Ankyrin repeat domain-containing protein 37 (163 aa).

3 ANK repeats span residues 29-58, 62-91, and 95-124; these read LGQS…DVNQ, FGEA…RIDM, and DGHT…TQDT. Positions 129-149 match the Nuclear localization signal motif; sequence QSSLHNLKETAAGVKRGQCCQ.

The protein localises to the nucleus. It localises to the cytoplasm. In Xenopus tropicalis (Western clawed frog), this protein is Ankyrin repeat domain-containing protein 37 (ankrd37).